Reading from the N-terminus, the 322-residue chain is Ferredoxin--NADP reductase (322 aa).

Residues L87, F119, D279, and T320 each coordinate FAD.

The protein belongs to the ferredoxin--NADP reductase type 2 family. In terms of assembly, homodimer. FAD is required as a cofactor.

The enzyme catalyses 2 reduced [2Fe-2S]-[ferredoxin] + NADP(+) + H(+) = 2 oxidized [2Fe-2S]-[ferredoxin] + NADPH. This is Ferredoxin--NADP reductase from Streptococcus suis (strain 98HAH33).